Reading from the N-terminus, the 592-residue chain is Bifunctional enzyme BirA/CoaX (592 aa).

The tract at residues 1 to 329 (MTVLKLSHWR…ISLRSDDRPV (329 aa)) is biotin--protein ligase. Positions 83-259 (QTALKHECAS…ELDAVLLQYA (177 aa)) constitute a BPL/LPL catalytic domain. A type III pantothenate kinase region spans residues 336–592 (DSERFLLLDG…AAEGREYEHI (257 aa)). 344 to 351 (DGGNSRLK) contacts ATP. Residues tyrosine 426 and 433 to 436 (GSDR) each bind substrate. Aspartate 435 acts as the Proton acceptor in catalysis. Residue threonine 458 coordinates ATP. Residue threonine 508 coordinates substrate.

This sequence in the N-terminal section; belongs to the biotin--protein ligase family. In the C-terminal section; belongs to the type III pantothenate kinase family. It depends on NH4(+) as a cofactor. The cofactor is K(+).

The protein localises to the cytoplasm. It carries out the reaction biotin + L-lysyl-[protein] + ATP = N(6)-biotinyl-L-lysyl-[protein] + AMP + diphosphate + H(+). The enzyme catalyses (R)-pantothenate + ATP = (R)-4'-phosphopantothenate + ADP + H(+). Its pathway is cofactor biosynthesis; coenzyme A biosynthesis; CoA from (R)-pantothenate: step 1/5. In terms of biological role, activates biotin to form biotinyl-5'-adenylate and transfers the biotin moiety to biotin-accepting proteins. Functionally, catalyzes the phosphorylation of pantothenate (Pan), the first step in CoA biosynthesis. The chain is Bifunctional enzyme BirA/CoaX (birA/coaX) from Neisseria meningitidis serogroup B (strain ATCC BAA-335 / MC58).